The primary structure comprises 531 residues: Peptide chain release factor 3 (531 aa).

The 269-residue stretch at 10–278 (RRRRTFAIIS…SLIDWAPAPK (269 aa)) folds into the tr-type G domain. GTP contacts are provided by residues 19–26 (SHPDAGKT), 87–91 (DTPGH), and 141–144 (NKYD).

Belongs to the TRAFAC class translation factor GTPase superfamily. Classic translation factor GTPase family. PrfC subfamily.

The protein localises to the cytoplasm. Functionally, increases the formation of ribosomal termination complexes and stimulates activities of RF-1 and RF-2. It binds guanine nucleotides and has strong preference for UGA stop codons. It may interact directly with the ribosome. The stimulation of RF-1 and RF-2 is significantly reduced by GTP and GDP, but not by GMP. The chain is Peptide chain release factor 3 from Neisseria meningitidis serogroup B (strain ATCC BAA-335 / MC58).